A 443-amino-acid polypeptide reads, in one-letter code: Deoxyguanosinetriphosphate triphosphohydrolase-like protein (443 aa).

The HD domain maps to 66–259 (RLTHSLEAAQ…MELADDIAYG (194 aa)).

This sequence belongs to the dGTPase family. Type 2 subfamily.

The protein is Deoxyguanosinetriphosphate triphosphohydrolase-like protein of Vibrio vulnificus (strain CMCP6).